Here is a 535-residue protein sequence, read N- to C-terminus: Large neutral amino acids transporter small subunit 2 (535 aa).

Residues 1-10 (MEKGARHRHN) show a composition bias toward basic residues. A disordered region spans residues 1 to 30 (MEKGARHRHNTDKNHAGGSESEDFPEASSG). The Cytoplasmic segment spans residues 1–44 (MEKGARHRHNTDKNHAGGSESEDFPEASSGGGGVALKKEIGLVS). Phosphoserine occurs at positions 19, 28, and 29. A helical membrane pass occupies residues 45–65 (ACGIIVGNIIGSGIFVSPKGV). L-leucine is bound at residue Ile53. At 66-73 (LENAGSVG) the chain is on the extracellular side. The helical transmembrane segment at 74 to 95 (LAVIVWIVTGLITAVGALCYAE) threads the bilayer. The Cytoplasmic portion of the chain corresponds to 96 to 116 (LGVTIPKSGGDYSYVKDIFGG). Residues 117 to 149 (LAGFLRLWIAVLVIYPTNQAVIALTFSNYVLQP) form a helical membrane-spanning segment. Asn134 contributes to the L-tryptophan binding site. Topologically, residues 150 to 157 (LFPTCFPP) are extracellular. The helical transmembrane segment at 158-178 (DSGLRLLAAICLLLLTWVNCS) threads the bilayer. Over 179–181 (SVR) the chain is Cytoplasmic. The helical transmembrane segment at 182–210 (WATRVQDIFTAGKLLALALIIIMGVVQIC) threads the bilayer. Topologically, residues 211–230 (KGEYFWLEPKNAFDNFQEPD) are extracellular. Residues 231 to 252 (IGLIALAFLQGSFAYGGWNFLN) form a helical membrane-spanning segment. Gly246 is a binding site for L-leucine. At 253-265 (YVTEELVDPYKNL) the chain is on the cytoplasmic side. The chain crosses the membrane as a helical span at residues 266-287 (PRAIFISIPLVTFVYVFANVAY). The Extracellular segment spans residues 288–312 (ITAMSPQELLASNAVAVTFGEKLLG). A helical membrane pass occupies residues 313–338 (VMAWIMPISVALSTFGGVNGSLFTSS). Residues 339–364 (RLFFAGAREGHLPSVLAMIHVKRCTP) are Cytoplasmic-facing. Residues 365 to 382 (IPALLFTCLSTLLMLVTS) form a helical membrane-spanning segment. Residues 383 to 386 (DMYT) are Extracellular-facing. A helical transmembrane segment spans residues 387–408 (LINYVGFINYLFYGVTVAGQIV). Residue Asn395 coordinates L-tryptophan. At 409–423 (LRWKKPDIPRPIKIN) the chain is on the cytoplasmic side. Helical transmembrane passes span 424 to 446 (LLFP…WSEP) and 447 to 466 (VVCG…YFLG). Residues 467-535 (VYWQHKPKCF…DKDSLEQSQP (69 aa)) are Cytoplasmic-facing. The interval 500-535 (GGSGTEGTREDMEEQQQPICQPSPGKDKDSLEQSQP) is disordered. Positions 524-535 (GKDKDSLEQSQP) are enriched in basic and acidic residues. At Ser529 the chain carries Phosphoserine.

Belongs to the amino acid-polyamine-organocation (APC) superfamily. L-type amino acid transporter (LAT) (TC 2.A.3.8) family. As to quaternary structure, disulfide-linked heterodimer composed of the catalytic light chain subunit SLC7A8 and the heavy chain subunit SLC3A2. SLC3A2 acts as a chaperone for correct plasma membrane trafficking and stabilization of SLC7A8 and modulates the substrate affinity and specificity of SLC7A8. ICAM-1 associates with the heterodimer SLC3A2/SLC7A8; facilitates leucine uptake. In terms of tissue distribution, mainly expressed in kidney and small intestine.

Its subcellular location is the cell membrane. It localises to the basolateral cell membrane. The catalysed reaction is L-histidine(in) + L-phenylalanine(out) = L-histidine(out) + L-phenylalanine(in). It carries out the reaction L-tryptophan(in) + L-phenylalanine(out) = L-tryptophan(out) + L-phenylalanine(in). The enzyme catalyses L-isoleucine(in) + L-phenylalanine(out) = L-isoleucine(out) + L-phenylalanine(in). It catalyses the reaction L-valine(in) + L-phenylalanine(out) = L-valine(out) + L-phenylalanine(in). The catalysed reaction is L-leucine(in) + L-phenylalanine(out) = L-leucine(out) + L-phenylalanine(in). It carries out the reaction L-glutamine(in) + L-phenylalanine(out) = L-glutamine(out) + L-phenylalanine(in). The enzyme catalyses L-cysteine(in) + L-phenylalanine(out) = L-cysteine(out) + L-phenylalanine(in). It catalyses the reaction L-phenylalanine(out) + L-methionine(in) = L-phenylalanine(in) + L-methionine(out). The catalysed reaction is L-leucine(out) + L-methionine(in) = L-leucine(in) + L-methionine(out). It carries out the reaction L-cysteine(out) + L-methionine(in) = L-cysteine(in) + L-methionine(out). The enzyme catalyses S-methylmercury-L-cysteine(out) + L-methionine(in) = S-methylmercury-L-cysteine(in) + L-methionine(out). It catalyses the reaction S-methylmercury-L-cysteine(in) + L-leucine(out) = S-methylmercury-L-cysteine(out) + L-leucine(in). The catalysed reaction is S-methylmercury-L-cysteine(in) + L-phenylalanine(out) = S-methylmercury-L-cysteine(out) + L-phenylalanine(in). It carries out the reaction L-phenylalanine(out) + L-serine(in) = L-phenylalanine(in) + L-serine(out). The enzyme catalyses L-phenylalanine(out) + glycine(in) = L-phenylalanine(in) + glycine(out). It catalyses the reaction L-phenylalanine(out) + L-alanine(in) = L-phenylalanine(in) + L-alanine(out). The catalysed reaction is 3,3',5-triiodo-L-thyronine(out) = 3,3',5-triiodo-L-thyronine(in). It carries out the reaction 3,3'-diiodo-L-thyronine(out) = 3,3'-diiodo-L-thyronine(in). The enzyme catalyses L-dopa(out) + L-phenylalanine(in) = L-dopa(in) + L-phenylalanine(out). The transporter activity is inhibited by 2-aminobicyclo-(2,2,1)heptane-2-carboxylic acid (BCH) (a specific inhibitor of system L transport). Functionally, associates with SLC3A2 to form a functional heterodimeric complex that translocates small and large neutral amino acids with broad specificity and a stoichiometry of 1:1. Functions as amino acid antiporter mediating the influx of extracellular essential amino acids mainly in exchange with the efflux of highly concentrated intracellular amino acids. Has relatively symmetrical selectivities but strongly asymmetrical substrate affinities at both the intracellular and extracellular sides of the transporter. This asymmetry allows SLC7A8 to regulate intracellular amino acid pools (mM concentrations) by exchange with external amino acids (uM concentration range), equilibrating the relative concentrations of different amino acids across the plasma membrane instead of mediating their net uptake. May play an essential role in the reabsorption of neutral amino acids from the epithelial cells to the bloodstream in the kidney. Involved in the uptake of methylmercury (MeHg) when administered as the L-cysteine or D,L-homocysteine complexes, and hence plays a role in metal ion homeostasis and toxicity. Involved in the cellular activity of small molecular weight nitrosothiols, via the stereoselective transport of L-nitrosocysteine (L-CNSO) across the transmembrane. Imports the thyroid hormone diiodothyronine (T2) and to a smaller extent triiodothyronine (T3) but not rT 3 or thyroxine (T4). Mediates the uptake of L-DOPA. May participate in auditory function. The sequence is that of Large neutral amino acids transporter small subunit 2 from Oryctolagus cuniculus (Rabbit).